The chain runs to 1085 residues: Aminopeptidase N (1085 aa).

A signal peptide (required for ER targeting and membrane association; not cleaved) is located at residues 1-30 (MKLTKGCAYKYIIFTVLILANILYDNKKRC). Residues 1 to 200 (MKLTKGCAYK…VKKNEPKIHY (200 aa)) are sufficient for targeting to the food vacuole. The segment at 108–130 (EKGDNNNNNHQNNNGNDNKKRLG) is disordered. Positions 112 to 123 (NNNNNHQNNNGN) are enriched in low complexity. Residues Glu319, Gly460, Ala461, and Glu463 each coordinate a peptide. A Zn(2+)-binding site is contributed by His496. Residue Glu497 is the Proton acceptor of the active site. Zn(2+) contacts are provided by His500 and Glu519.

This sequence belongs to the peptidase M1 family. Heterodimer of the p68 form and the p35 form which are derived from the p120 precursor. The cofactor is Zn(2+). Post-translationally, the full length protein appears to be cleaved into a 120 kDa precursor. This precursor is then proteolytically cleaved at the N-terminus generating a 96 kDa form which is further processed at the C-terminus into 68 kDa and 35 kDa forms that remain associated.

The protein localises to the parasitophorous vacuole membrane. It is found in the nucleus. The protein resides in the cytoplasm. It localises to the vacuole lumen. Its activity is regulated as follows. Inhibited by 1,10-phenanthroline, EDTA and bestatin. Inhibited by (Benzyl)Tyr-Ala (BTA). Activity is not affected by phosphoramidin, PMSF, leupeptin, iodoacetamide or pepstatin. Displays aminopeptidase activity with a broad substrate specificity. Preferentially, cleaves after Leu and Met, but also cleaves after Ala and Arg. Low activity towards Lys, Phe, Tyr, Trp, Gln, Ser and Gly and negligible activity towards Glu, Asp, Pro, Ile, Thr, Val, His and Asn. Has dipeptidase activity. Plays a role in the terminal stages of host hemoglobin digestion by cleaving the N-terminal residue of small hemoglobin-derived oligopeptides. In Plasmodium falciparum (isolate 3D7), this protein is Aminopeptidase N.